The following is a 477-amino-acid chain: 3-isopropylmalate dehydratase large subunit 1 (477 aa).

Positions 357, 417, and 420 each coordinate [4Fe-4S] cluster.

Belongs to the aconitase/IPM isomerase family. LeuC type 1 subfamily. In terms of assembly, heterodimer of LeuC and LeuD. Requires [4Fe-4S] cluster as cofactor.

It catalyses the reaction (2R,3S)-3-isopropylmalate = (2S)-2-isopropylmalate. Its pathway is amino-acid biosynthesis; L-leucine biosynthesis; L-leucine from 3-methyl-2-oxobutanoate: step 2/4. Catalyzes the isomerization between 2-isopropylmalate and 3-isopropylmalate, via the formation of 2-isopropylmaleate. This Bradyrhizobium diazoefficiens (strain JCM 10833 / BCRC 13528 / IAM 13628 / NBRC 14792 / USDA 110) protein is 3-isopropylmalate dehydratase large subunit 1.